Reading from the N-terminus, the 846-residue chain is FNIP repeat-containing protein DDB_G0289381 (846 aa).

Residues 1–11 (MKLLSFKKKPS) show a composition bias toward basic residues. The segment at 1-39 (MKLLSFKKKPSLTKSQSCPDKLKNLKEQQKDPKNGANYD) is disordered. A compositionally biased stretch (basic and acidic residues) spans 20–33 (DKLKNLKEQQKDPK). FNIP repeat units lie at residues 159-193 (IPNH…FGEK), 194-239 (FNQV…FGNN), 240-283 (FDQI…FQEN), and 284-325 (FNQP…YGGD). The tract at residues 362–384 (SSISLDISGGGSGSGSGVNSTTT) is disordered. 3 FNIP repeats span residues 458–500 (FQQL…FGDG), 501–546 (FNQQ…FGKS), and 654–693 (FNQS…MFNK). The interval 702–734 (SNNNNENNNENNNENNNENNNENNNENNNNTNS) is disordered. Residues 702 to 734 (SNNNNENNNENNNENNNENNNENNNENNNNTNS) adopt a coiled-coil conformation.

This Dictyostelium discoideum (Social amoeba) protein is FNIP repeat-containing protein DDB_G0289381.